The following is an 810-amino-acid chain: Phospholipase D alpha 1 (810 aa).

The C2 domain occupies 1 to 126 (MAQHLLHGTL…INGEEVDQWV (126 aa)). D187 contacts Ca(2+). One can recognise a PLD phosphodiesterase 1 domain in the interval 327–366 (TMFTHHQKIVVVDSEMPSRGGSEMRRIVSFVGGIDLCDGR). Catalysis depends on residues H332, K334, and D339. H332 is an a 1,2-diacyl-sn-glycero-3-phosphate binding site. H372 and H406 together coordinate Ca(2+). Positions 522 and 661 each coordinate a 1,2-diacyl-sn-glycero-3-phosphate. The 28-residue stretch at 656–683 (FMIYVHTKMMIVDDEYIIIGSANINQRS) folds into the PLD phosphodiesterase 2 domain. Active-site residues include H661, K663, and D668. Residue E722 participates in Ca(2+) binding.

It belongs to the phospholipase D family. C2-PLD subfamily. Interacts with GPA1. This binding inhibits PLDALPHA1 activity and is relieved by GTP. It depends on Ca(2+) as a cofactor. Highly expressed in roots, stems and flowers, moderately in leaves, seedlings and siliques. Not detected in seeds.

The protein localises to the cytoplasm. It is found in the cell membrane. It localises to the mitochondrion membrane. Its subcellular location is the microsome membrane. The protein resides in the vacuole. The protein localises to the cytoplasmic vesicle. It is found in the clathrin-coated vesicle. It carries out the reaction a 1,2-diacyl-sn-glycero-3-phosphocholine + H2O = a 1,2-diacyl-sn-glycero-3-phosphate + choline + H(+). Not inhibited by neomycin. In terms of biological role, hydrolyzes glycerol-phospholipids at the terminal phosphodiesteric bond to generate phosphatidic acids (PA). Plays an important role in various cellular processes, including phytohormone action and response to stress, characterized by acidification of the cell. Involved in wound induction of jasmonic acid. May be involved in membrane lipid remodeling. Probably involved in freezing tolerance by modulating the cold-responsive genes and accumulation of osmolytes. Can use phosphatidylcholine (PC), phosphatidylethanolamine (PE) and phosphatidylglycerol (PG) as substrates, both in presence or in absence of PIP2. Its main substrate is phosphatidylcholine. Stimulates the intrinsic GTPase activity of GPA1 upon binding. Mediates the abscisic acid effects on stomata through interaction with GPA1 and the production of phosphatidic acid that bind to ABI1. Involved in seed aging and deterioration. Involved in microtubule stabilization and salt tolerance. Involved in abscisic acid-induced stomatal closure. This is Phospholipase D alpha 1 from Arabidopsis thaliana (Mouse-ear cress).